We begin with the raw amino-acid sequence, 385 residues long: Lipid-A-disaccharide synthase 2 (385 aa).

This sequence belongs to the LpxB family.

It catalyses the reaction a lipid X + a UDP-2-N,3-O-bis[(3R)-3-hydroxyacyl]-alpha-D-glucosamine = a lipid A disaccharide + UDP + H(+). The protein operates within bacterial outer membrane biogenesis; LPS lipid A biosynthesis. Condensation of UDP-2,3-diacylglucosamine and 2,3-diacylglucosamine-1-phosphate to form lipid A disaccharide, a precursor of lipid A, a phosphorylated glycolipid that anchors the lipopolysaccharide to the outer membrane of the cell. In Legionella pneumophila (strain Lens), this protein is Lipid-A-disaccharide synthase 2.